A 79-amino-acid polypeptide reads, in one-letter code: Serine protease inhibitor Kazal-type 1 (79 aa).

The first 23 residues, methionine 1–alanine 23, serve as a signal peptide directing secretion. Residues leucine 26–cysteine 79 enclose the Kazal-like domain. Intrachain disulfides connect cysteine 32–cysteine 61, cysteine 39–cysteine 58, and cysteine 47–cysteine 79.

The protein resides in the secreted. Functionally, serine protease inhibitor which exhibits anti-trypsin activity. In the pancreas, protects against trypsin-catalyzed premature activation of zymogens. Its function is as follows. In the male reproductive tract, binds to sperm heads where it modulates sperm capacitance by inhibiting calcium uptake and nitrogen oxide (NO) production. The polypeptide is Serine protease inhibitor Kazal-type 1 (SPINK1) (Bos taurus (Bovine)).